Consider the following 910-residue polypeptide: MINSLLTRVFGSRNERQLRQLNRIVAKINALEPEIEKLSDEQLQAKTPEFKQRIADGEALDKVLPEAFAVCREAGRRVLGMRHYDVQLIGGMVLHLGKIAEMRTGEGKTLVATLPVYLNALEGKGVHVVTVNDYLARRDAAQMGKLYNWLGLSVGVVYPGMPHSDKREAYASDITYGTNNEFGFDYLRDNMALSKADRYQRGLHYAIVDEVDSILIDEARTPLIISGPADDSPELYIRVNRVVPNLVKQEAEDGEGDFWVDEKGKQVHLSEAGMEHAEQLLVEAGILDGETEGLYAPQNLTVVHHLNAALRAHAIYQRDVDYIVRDGEVVIVDEFTGRTLSGRRWSDGLHQAVEAKEGVPVQRENQTLASITFQNLFRMYKKLSGMTGTADTEAFEFQSIYGLEVVVIPTNRPTIRKDSPDQVFLNRKGKFNAVLADIEECAKRGQPVLVGTTSIETSEMLSEHLAKAGVKHEVLNAKQHDREATIVANAGRPAAVTIATNMAGRGTDIVLGGSLEAEIHELGEDATDAQKAAVKAEWQQRHDAVKAAGGLHIVGTERHESRRIDNQLRGRSGRQGDPGSSRFYLSLEDNLMRIFASDWVQKAMRMMGMKEDDVIEDRLVSRQIEKAQRKVEAHNFDIRKNLLDFDDVNNDQRKVIYAQRDELLDAESVKDNVDGIRDDVIFDIVARFVPPNSIDEQWDLRGLEATLESDFGLQMSLTGLVKEHEELDAEAIAAKVQERVNQHFAEKEAGVGEETMRALEKHVMLTVLDQSWKEHLARMDYLRQGIYLRGYAQKQPKQEYKKEAFELFSDMLENVKREVVTLLSRVRIRSDEEVQALEAAERQQVEARLSQSQFQHQDVGSYSADEEAAQVQAAQQGIAQVQRDEPKIGRNDPCPCGSGKKYKHCHGQLS.

ATP-binding positions include Gln-87, Gly-105 to Thr-109, and Asp-508. Positions Arg-558–Leu-568 are enriched in basic and acidic residues. 2 disordered regions span residues Arg-558–Ser-580 and Ala-873–Ser-910. Zn(2+) is bound by residues Cys-894, Cys-896, Cys-905, and His-906. Basic residues predominate over residues Lys-900 to Ser-910.

It belongs to the SecA family. Monomer and homodimer. Part of the essential Sec protein translocation apparatus which comprises SecA, SecYEG and auxiliary proteins SecDF-YajC and YidC. It depends on Zn(2+) as a cofactor.

Its subcellular location is the cell inner membrane. It is found in the cytoplasm. The enzyme catalyses ATP + H2O + cellular proteinSide 1 = ADP + phosphate + cellular proteinSide 2.. Part of the Sec protein translocase complex. Interacts with the SecYEG preprotein conducting channel. Has a central role in coupling the hydrolysis of ATP to the transfer of proteins into and across the cell membrane, serving both as a receptor for the preprotein-SecB complex and as an ATP-driven molecular motor driving the stepwise translocation of polypeptide chains across the membrane. The chain is Protein translocase subunit SecA from Stenotrophomonas maltophilia (strain R551-3).